The chain runs to 449 residues: GTPase Der (449 aa).

2 EngA-type G domains span residues 4 to 169 and 177 to 353; these read PIVA…PAGE and IQVA…EQHR. GTP-binding positions include 10 to 17, 57 to 61, 120 to 123, 183 to 190, 230 to 234, and 295 to 298; these read GRPNVGKS, DTGGL, NKCE, DTAGI, and NKWD. The 86-residue stretch at 354–439 folds into the KH-like domain; it reads RRVTTAVVND…PIRLLWRSKK (86 aa).

The protein belongs to the TRAFAC class TrmE-Era-EngA-EngB-Septin-like GTPase superfamily. EngA (Der) GTPase family. In terms of assembly, associates with the 50S ribosomal subunit.

GTPase that plays an essential role in the late steps of ribosome biogenesis. The chain is GTPase Der from Thermosynechococcus vestitus (strain NIES-2133 / IAM M-273 / BP-1).